We begin with the raw amino-acid sequence, 217 residues long: Thymidylate kinase (217 aa).

Residue 14-21 (GNEGSGKT) coordinates ATP.

The protein belongs to the thymidylate kinase family.

It carries out the reaction dTMP + ATP = dTDP + ADP. In terms of biological role, phosphorylation of dTMP to form dTDP in both de novo and salvage pathways of dTTP synthesis. In Orientia tsutsugamushi (strain Ikeda) (Rickettsia tsutsugamushi), this protein is Thymidylate kinase.